The sequence spans 396 residues: Elongation factor Tu (396 aa).

A tr-type G domain is found at 11–205; the sequence is KPHVNIGTIG…VVDEYIPTPK (195 aa). The tract at residues 20-27 is G1; the sequence is GHVDHGKT. A GTP-binding site is contributed by 20–27; the sequence is GHVDHGKT. Thr27 contacts Mg(2+). The tract at residues 61-65 is G2; the sequence is GITIN. Positions 82-85 are G3; the sequence is DAPG. GTP-binding positions include 82–86 and 137–140; these read DAPGH and NKTD. The tract at residues 137–140 is G4; that stretch reads NKTD. The tract at residues 175 to 177 is G5; it reads SAL.

The protein belongs to the TRAFAC class translation factor GTPase superfamily. Classic translation factor GTPase family. EF-Tu/EF-1A subfamily. Monomer.

The protein localises to the cytoplasm. It carries out the reaction GTP + H2O = GDP + phosphate + H(+). Its function is as follows. GTP hydrolase that promotes the GTP-dependent binding of aminoacyl-tRNA to the A-site of ribosomes during protein biosynthesis. The protein is Elongation factor Tu of Limosilactobacillus fermentum (strain NBRC 3956 / LMG 18251) (Lactobacillus fermentum).